Here is a 370-residue protein sequence, read N- to C-terminus: Quinolinate synthase (370 aa).

Residues H62 and S83 each coordinate iminosuccinate. C128 is a binding site for [4Fe-4S] cluster. Residues 154 to 156 and S171 each bind iminosuccinate; that span reads YAN. C215 is a binding site for [4Fe-4S] cluster. Residues 241–243 and T258 contribute to the iminosuccinate site; that span reads HPE. C312 is a binding site for [4Fe-4S] cluster.

This sequence belongs to the quinolinate synthase family. Type 1 subfamily. The cofactor is [4Fe-4S] cluster.

It localises to the cytoplasm. The catalysed reaction is iminosuccinate + dihydroxyacetone phosphate = quinolinate + phosphate + 2 H2O + H(+). The protein operates within cofactor biosynthesis; NAD(+) biosynthesis; quinolinate from iminoaspartate: step 1/1. Catalyzes the condensation of iminoaspartate with dihydroxyacetone phosphate to form quinolinate. The polypeptide is Quinolinate synthase (Neisseria gonorrhoeae (strain ATCC 700825 / FA 1090)).